Consider the following 269-residue polypeptide: Eukaryotic translation initiation factor 3 subunit G-2 (269 aa).

In terms of domain architecture, RRM spans 189-267 (SAVRISNLSE…LILCVEWSKP (79 aa)).

Belongs to the eIF-3 subunit G family. In terms of assembly, component of the eukaryotic translation initiation factor 3 (eIF-3) complex. The eIF-3 complex interacts with pix.

It is found in the cytoplasm. Functionally, RNA-binding component of the eukaryotic translation initiation factor 3 (eIF-3) complex, which is involved in protein synthesis of a specialized repertoire of mRNAs and, together with other initiation factors, stimulates binding of mRNA and methionyl-tRNAi to the 40S ribosome. The eIF-3 complex specifically targets and initiates translation of a subset of mRNAs involved in cell proliferation. This subunit can bind 18S rRNA. The chain is Eukaryotic translation initiation factor 3 subunit G-2 from Drosophila ananassae (Fruit fly).